The sequence spans 108 residues: Thiosulfate sulfurtransferase GlpE (108 aa).

The region spanning 17-105 (QEKEAVLVDI…WQRQFPAEVA (89 aa)) is the Rhodanese domain. The active-site Cysteine persulfide intermediate is the Cys-65.

This sequence belongs to the GlpE family.

It is found in the cytoplasm. It catalyses the reaction thiosulfate + hydrogen cyanide = thiocyanate + sulfite + 2 H(+). The catalysed reaction is thiosulfate + [thioredoxin]-dithiol = [thioredoxin]-disulfide + hydrogen sulfide + sulfite + 2 H(+). Transferase that catalyzes the transfer of sulfur from thiosulfate to thiophilic acceptors such as cyanide or dithiols. May function in a CysM-independent thiosulfate assimilation pathway by catalyzing the conversion of thiosulfate to sulfite, which can then be used for L-cysteine biosynthesis. The chain is Thiosulfate sulfurtransferase GlpE from Escherichia coli O127:H6 (strain E2348/69 / EPEC).